A 209-amino-acid polypeptide reads, in one-letter code: Small ribosomal subunit protein uS4 (209 aa).

The region spanning 99 to 162 (RRLDNMVYRL…RKNNKIIEAM (64 aa)) is the S4 RNA-binding domain.

This sequence belongs to the universal ribosomal protein uS4 family. In terms of assembly, part of the 30S ribosomal subunit. Contacts protein S5. The interaction surface between S4 and S5 is involved in control of translational fidelity.

In terms of biological role, one of the primary rRNA binding proteins, it binds directly to 16S rRNA where it nucleates assembly of the body of the 30S subunit. Functionally, with S5 and S12 plays an important role in translational accuracy. This is Small ribosomal subunit protein uS4 from Syntrophus aciditrophicus (strain SB).